Reading from the N-terminus, the 285-residue chain is uncharacterized protein (285 aa).

Transmembrane regions (helical) follow at residues 6–26 (YLVVILTVAGVLVILGFTPLI), 38–58 (VFAAILFLYVFFGRQIIYIFP), 84–104 (IFLLDLCPFFALIGPIFIFLR), 110–130 (GVLAIFGFYGAAITLFGELIF), 153–173 (FMMHFLSFLLSLAVFLWDDGF), 176–196 (ISFFYIHVFALAYLSYVALMV), and 236–256 (LIFGVSFGLSYFAIVLLTVLV).

The protein localises to the cell membrane. This is an uncharacterized protein from Mycoplasma pneumoniae (strain ATCC 29342 / M129 / Subtype 1) (Mycoplasmoides pneumoniae).